The sequence spans 547 residues: Chaperonin GroEL (547 aa).

ATP-binding positions include 30 to 33 (TLGP), Lys51, 87 to 91 (DGTTT), Gly415, 479 to 481 (NAA), and Asp495.

It belongs to the chaperonin (HSP60) family. Forms a cylinder of 14 subunits composed of two heptameric rings stacked back-to-back. Interacts with the co-chaperonin GroES.

It is found in the cytoplasm. It catalyses the reaction ATP + H2O + a folded polypeptide = ADP + phosphate + an unfolded polypeptide.. Its function is as follows. Together with its co-chaperonin GroES, plays an essential role in assisting protein folding. The GroEL-GroES system forms a nano-cage that allows encapsulation of the non-native substrate proteins and provides a physical environment optimized to promote and accelerate protein folding. In Cupriavidus taiwanensis (strain DSM 17343 / BCRC 17206 / CCUG 44338 / CIP 107171 / LMG 19424 / R1) (Ralstonia taiwanensis (strain LMG 19424)), this protein is Chaperonin GroEL.